Reading from the N-terminus, the 442-residue chain is Cell division protein FtsA (442 aa).

The disordered stretch occupies residues 401-428; it reads VTSYDNDSYDAPEETVYDEPEQKKSDED. The span at 407–419 shows a compositional bias: acidic residues; the sequence is DSYDAPEETVYDE.

It belongs to the FtsA/MreB family. Self-interacts. Interacts with FtsZ.

The protein resides in the cell membrane. Cell division protein that is involved in the assembly of the Z ring. May serve as a membrane anchor for the Z ring. The protein is Cell division protein FtsA of Enterococcus hirae.